Reading from the N-terminus, the 345-residue chain is L-threonine 3-dehydrogenase (345 aa).

A Zn(2+)-binding site is contributed by Cys-42. Active-site charge relay system residues include Thr-44 and His-47. Zn(2+) is bound by residues His-67, Glu-68, Cys-97, Cys-100, Cys-103, and Cys-111. NAD(+) contacts are provided by residues Ile-179, Asp-199, Arg-204, 266–268, and 290–291; these read LGI and IY.

It belongs to the zinc-containing alcohol dehydrogenase family. In terms of assembly, homotetramer. Requires Zn(2+) as cofactor.

The protein resides in the cytoplasm. It catalyses the reaction L-threonine + NAD(+) = (2S)-2-amino-3-oxobutanoate + NADH + H(+). It participates in amino-acid degradation; L-threonine degradation via oxydo-reductase pathway; glycine from L-threonine: step 1/2. In terms of biological role, catalyzes the NAD(+)-dependent oxidation of L-threonine to 2-amino-3-ketobutyrate. The polypeptide is L-threonine 3-dehydrogenase (Rhizobium rhizogenes (strain K84 / ATCC BAA-868) (Agrobacterium radiobacter)).